A 202-amino-acid polypeptide reads, in one-letter code: Holliday junction branch migration complex subunit RuvA (202 aa).

The domain I stretch occupies residues 1 to 64; sequence MIGRLRGTLA…EDAQLLYGFA (64 aa). The interval 65–143 is domain II; that stretch reads SKRERDFFRE…AWEAVPSMFA (79 aa). The interval 144–154 is flexible linker; sequence LVPNQPDAPAP. The segment at 154-202 is domain III; sequence PVASAESDAVSALISLGYKPQEASKAVSAIKDKGLSSEDMIRRALKGMI.

It belongs to the RuvA family. In terms of assembly, homotetramer. Forms an RuvA(8)-RuvB(12)-Holliday junction (HJ) complex. HJ DNA is sandwiched between 2 RuvA tetramers; dsDNA enters through RuvA and exits via RuvB. An RuvB hexamer assembles on each DNA strand where it exits the tetramer. Each RuvB hexamer is contacted by two RuvA subunits (via domain III) on 2 adjacent RuvB subunits; this complex drives branch migration. In the full resolvosome a probable DNA-RuvA(4)-RuvB(12)-RuvC(2) complex forms which resolves the HJ.

The protein localises to the cytoplasm. In terms of biological role, the RuvA-RuvB-RuvC complex processes Holliday junction (HJ) DNA during genetic recombination and DNA repair, while the RuvA-RuvB complex plays an important role in the rescue of blocked DNA replication forks via replication fork reversal (RFR). RuvA specifically binds to HJ cruciform DNA, conferring on it an open structure. The RuvB hexamer acts as an ATP-dependent pump, pulling dsDNA into and through the RuvAB complex. HJ branch migration allows RuvC to scan DNA until it finds its consensus sequence, where it cleaves and resolves the cruciform DNA. The sequence is that of Holliday junction branch migration complex subunit RuvA from Pseudomonas fluorescens (strain ATCC BAA-477 / NRRL B-23932 / Pf-5).